A 659-amino-acid polypeptide reads, in one-letter code: Interferon-induced GTP-binding protein Mx1 (659 aa).

Residue M1 is modified to N-acetylmethionine. The interval M1–C40 is disordered. Positions D65 to P338 constitute a Dynamin-type G domain. The G1 motif stretch occupies residues G75–S82. A GTP-binding site is contributed by G75–S82. The tract at residues V100–R102 is G2 motif. The segment at D176–G179 is G3 motif. GTP contacts are provided by residues D176–I180 and T245–D248. Positions T245–D248 are G4 motif. The G5 motif stretch occupies residues K277–G280. The tract at residues L339–E364 is bundle signaling element (BSE). A middle domain region spans residues E364–C531. Residues E365 to E629 form a stalk region. The critical for lipid-binding stretch occupies residues K552 to K555. The GED domain maps to L571–G659.

It belongs to the TRAFAC class dynamin-like GTPase superfamily. Dynamin/Fzo/YdjA family. Homooligomer. Oligomerizes into multimeric filamentous or ring-like structures by virtue of its stalk domain. Oligomerization is critical for GTPase activity, protein stability, and recognition of viral target structures. Interacts with TRPC1, TRPC3, TRPC4, TRPC5, TRPC6 and TRPC7. Interacts with HSPA5. Interacts with TUBB/TUBB5. Interacts with DDX39A and DDX39B. Post-translationally, ISGylated.

The protein localises to the cytoplasm. It localises to the endoplasmic reticulum membrane. Its subcellular location is the perinuclear region. Functionally, interferon-induced dynamin-like GTPase with antiviral activity. This chain is Interferon-induced GTP-binding protein Mx1 (MX1), found in Phoca vitulina (Harbor seal).